The following is a 549-amino-acid chain: MNYTVKFQNVTKKYKMYNKPSDKLKDLFRKQEDGVFHYALSNVSFEVPKGEIVGIIGLNGSGKSTLSNLIAGVTMPNKGKIDIKGSAALIAISSGLNGQLSGIENIELKGLMMGLTKEKVKEIIPQIIEFADIGKFINQPVKTYSSGMKARLGFAISVNINPDVLVIDEALSVGDQTFTNKCLKKMNEFKEKGKTIFFISHSLNQVNSFCTKAIWLYYGQVREYGDVNDVVANYRAFLKEYNQMSMEDRKKFQEEQVLQFQHGLLQDYAKETLTNPRRLKGERRKYKKKNRVILGISLALMAGIISVGVYYKDIFPIKQDTQHVKQAVQGEDTNEAKQDKRQRVEENMYMVKSNGINIRKEASASSEKLAVANFGDIITIFDDNKSKEKDAEWIQVSLSKGEIGWVSTKFIEPFKSNDSIIEDAKLADITALLKRVYGENMASAPTYFGKTLNELKATYPQPLNPLPSMAGKTIVKDGNIQFGILQDKVVEVVFQDISMSIAKLHELLGKESLSNDVEKNYFYETKSYYIAARSDQTHREIQSISIVKK.

The 222-residue stretch at 22-243 (DKLKDLFRKQ…YRAFLKEYNQ (222 aa)) folds into the ABC transporter domain. An ATP-binding site is contributed by 57 to 64 (GLNGSGKS). Residues 244-549 (MSMEDRKKFQ…EIQSISIVKK (306 aa)) form a unknown region. An SH3b domain is found at 346–415 (ENMYMVKSNG…VSTKFIEPFK (70 aa)).

This sequence belongs to the ABC transporter superfamily. Teichoic acids exporter (TC 3.A.1.104.1) family. As to quaternary structure, the complex is composed of two ATP-binding proteins (TagH) and two transmembrane proteins (TagG).

It is found in the cell membrane. It catalyses the reaction ATP + H2O + teichoic acidSide 1 = ADP + phosphate + teichoic acidSide 2.. Its function is as follows. Part of the ABC transporter complex TagGH involved in teichoic acids export. Responsible for energy coupling to the transport system. The polypeptide is Teichoic acids export ATP-binding protein TagH (Bacillus cereus (strain ZK / E33L)).